Consider the following 801-residue polypeptide: Phenylalanine--tRNA ligase beta subunit (801 aa).

The 109-residue stretch at 39–147 folds into the tRNA-binding domain; sequence GGGLDEVVVA…TDLPLGVPVF (109 aa). Residues 401-477 form the B5 domain; it reads LPRRTVRFRV…RLNGYNNIPV (77 aa). 4 residues coordinate Mg(2+): Asp455, Asp461, Glu464, and Glu465. One can recognise an FDX-ACB domain in the interval 708-801; it reads SRFPDTFRDI…LVKKLAVTIR (94 aa).

The protein belongs to the phenylalanyl-tRNA synthetase beta subunit family. Type 1 subfamily. Tetramer of two alpha and two beta subunits. Mg(2+) serves as cofactor.

The protein resides in the cytoplasm. The enzyme catalyses tRNA(Phe) + L-phenylalanine + ATP = L-phenylalanyl-tRNA(Phe) + AMP + diphosphate + H(+). This is Phenylalanine--tRNA ligase beta subunit from Geobacter metallireducens (strain ATCC 53774 / DSM 7210 / GS-15).